Here is a 561-residue protein sequence, read N- to C-terminus: AT-rich interactive domain-containing protein 3B (561 aa).

An N-acetylmethionine modification is found at methionine 1. Residues 1 to 17 are compositionally biased toward low complexity; sequence MEPLQQQQQQQQQQQKQ. Disordered stretches follow at residues 1–36, 53–122, and 136–179; these read MEPL…QQMR, LSAT…SKYF, and PMSN…WNLD. Serine 89 bears the Phosphoserine mark. Acidic residues predominate over residues 90–109; that stretch reads EPEEEDGGLEDEDGDDEVAE. Residues 152–162 are compositionally biased toward basic and acidic residues; it reads QAKEDHTKDAS. The span at 164-178 shows a compositional bias: polar residues; the sequence is ASPSVSTAGQPNWNL. Position 165 is a phosphoserine (serine 165). Residues 203–365 form an interaction with RB1 region; that stretch reads SRDFAKLYEL…SPPKIRFPIL (163 aa). The ARID domain occupies 215 to 307; it reads DPERKEFLDD…YLYAYECEKK (93 aa). A Phosphoserine modification is found at serine 311. Asymmetric dimethylarginine is present on arginine 361. Residues 370–397 form a disordered region; it reads SSGTNTSSPRISPATTLRKGDGAPVTTV. In terms of domain architecture, REKLES spans 419 to 517; the sequence is AALEQLRERL…GVLFAQKPVV (99 aa). An interaction with ARID3A region spans residues 490–513; sequence SSIGSINMSVDIDGTTYAGVLFAQ. Residues 523–552 are compositionally biased toward low complexity; the sequence is SAPQSLGSSASSSSSSHCSPSPTSSRGTPS. The disordered stretch occupies residues 523–561; that stretch reads SAPQSLGSSASSSSSSHCSPSPTSSRGTPSAEPSTSWSL.

Heterodimer with ARID3A. Interacts with unphosphorylated RB1. As to expression, expressed in placenta, testis and leukocytes. Expressed in neuroblastoma. Present in K-562 erythrocytic leukemia cell line (at protein level).

Its subcellular location is the nucleus. Transcription factor which may be involved in neuroblastoma growth and malignant transformation. Favors nuclear targeting of ARID3A. The polypeptide is AT-rich interactive domain-containing protein 3B (ARID3B) (Homo sapiens (Human)).